A 405-amino-acid chain; its full sequence is L-rhamnonate dehydratase (405 aa).

Substrate is bound by residues His33 and Arg59. Positions 226, 252, and 280 each coordinate Mg(2+). The active-site Proton acceptor is His329. Residue Glu349 participates in substrate binding.

The protein belongs to the mandelate racemase/muconate lactonizing enzyme family. RhamD subfamily. In terms of assembly, homooctamer; tetramer of dimers. Mg(2+) serves as cofactor.

The enzyme catalyses L-rhamnonate = 2-dehydro-3-deoxy-L-rhamnonate + H2O. Its function is as follows. Catalyzes the dehydration of L-rhamnonate to 2-keto-3-deoxy-L-rhamnonate (KDR). The protein is L-rhamnonate dehydratase of Salmonella typhi.